A 656-amino-acid polypeptide reads, in one-letter code: UV-damage endonuclease (656 aa).

Disordered regions lie at residues 1-82 (MPSR…GKEQ), 119-146 (PSVV…KEPV), 175-194 (IIEP…RPPA), 241-264 (PLQF…EPQD), 492-515 (EPCD…TLPP), 550-620 (DMVP…GPYN), and 636-656 (KREV…EFDG). The span at 13-32 (TPQSESSTFSSTLDSSAPSP) shows a compositional bias: low complexity. Basic and acidic residues-rich tracts occupy residues 48-82 (SEKD…GKEQ) and 135-146 (TNAEEREAKEPV). A compositionally biased stretch (basic and acidic residues) spans 550-561 (DMVPYDRDDENR). Residues 568-579 (APKKKKGGKRKR) show a composition bias toward basic residues. Over residues 583 to 595 (EEAAEPEEVDTAA) the composition is skewed to acidic residues. Residues 596–614 (DDVKDAPEGPKEVPEEERA) are compositionally biased toward basic and acidic residues. Over residues 647–656 (EVEDEGEFDG) the composition is skewed to acidic residues.

Belongs to the uve1/UvsE family. Mg(2+) serves as cofactor.

Its function is as follows. Endonuclease for the repair of UV-irradiated DNA. Involved in the excision of cyclobutane pyrimidine dimers (CPD) and 6-4 pyrimidine pyrimidones (6-4PP) which forms the UV damage repair (UVDR) pathway. In Neurospora crassa (strain ATCC 24698 / 74-OR23-1A / CBS 708.71 / DSM 1257 / FGSC 987), this protein is UV-damage endonuclease (mus-18).